Reading from the N-terminus, the 144-residue chain is Large ribosomal subunit protein uL13 (144 aa).

The protein belongs to the universal ribosomal protein uL13 family. As to quaternary structure, part of the 50S ribosomal subunit.

This protein is one of the early assembly proteins of the 50S ribosomal subunit, although it is not seen to bind rRNA by itself. It is important during the early stages of 50S assembly. This Clostridium acetobutylicum (strain ATCC 824 / DSM 792 / JCM 1419 / IAM 19013 / LMG 5710 / NBRC 13948 / NRRL B-527 / VKM B-1787 / 2291 / W) protein is Large ribosomal subunit protein uL13.